The chain runs to 653 residues: Exocyst complex component 7 (653 aa).

The tract at residues 1–384 is SEC8 and ARHQ binding; that stretch reads MIPPQEASAR…TKNKLPGLIT (384 aa). 2 coiled-coil regions span residues 5-42 and 63-85; these read QEAS…TKNM and VHKQ…SCLD. Position 133 is a phosphoserine (Ser133). A disordered region spans residues 238-272; it reads FRKSSSSSGVPYSPAIPNKRKDTPTKKPIKRPGRD.

Belongs to the EXO70 family. In terms of assembly, the exocyst complex is composed of EXOC1, EXOC2, EXOC3, EXOC4, EXOC5, EXOC6, EXOC7 and EXOC8. Interacts with ARHQ in a GTP-dependent manner. Interacts with RAB11FIP3.

The protein localises to the cytoplasm. The protein resides in the cytosol. It is found in the cell membrane. Its subcellular location is the midbody. It localises to the midbody ring. Its function is as follows. Component of the exocyst complex involved in the docking of exocytic vesicles with fusion sites on the plasma membrane. In adipocytes, plays a crucial role in targeting SLC2A4 vesicle to the plasma membrane in response to insulin, perhaps directing the vesicle to the precise site of fusion. It is required for neuron survival and plays an essential role in cortical development. This chain is Exocyst complex component 7 (Exoc7), found in Rattus norvegicus (Rat).